Consider the following 354-residue polypeptide: FAD synthetase 1, chloroplastic (354 aa).

The N-terminal 75 residues, 1–75 (MLCGGSRASV…SQGDDHPELS (75 aa)), are a transit peptide targeting the chloroplast. The disordered stretch occupies residues 228-248 (SVNTEEEDSKSKERGQVSSTR).

Requires Mg(2+) as cofactor.

It is found in the plastid. The protein resides in the chloroplast. It carries out the reaction FMN + ATP + H(+) = FAD + diphosphate. The protein operates within cofactor biosynthesis; FAD biosynthesis; FAD from FMN: step 1/1. Functionally, catalyzes the adenylation of flavin mononucleotide (FMN) to form flavin adenine dinucleotide (FAD) coenzyme. This chain is FAD synthetase 1, chloroplastic, found in Arabidopsis thaliana (Mouse-ear cress).